A 1528-amino-acid chain; its full sequence is Rho GTPase-activating protein 7 (1528 aa).

Disordered stretches follow at residues 72–94 (DFPG…HEGE), 288–310 (MSAE…PPKV), and 372–436 (ALST…TKPK). A compositionally biased stretch (basic and acidic residues) spans 81-94 (LSKDVDENDSHEGE). Residues 374 to 384 (STSSSPSGTPT) show a composition bias toward low complexity. Over residues 396 to 436 (GSESGADTISVNQTRVNLSSDTESTDLPSSTPVANSGTKPK) the composition is skewed to polar residues. One can recognise an SAM domain in the interval 448-515 (KAEIEAKEAC…LNKCAVMKLE (68 aa)). S523, S526, and S566 each carry phosphoserine. Disordered stretches follow at residues 558-617 (PKQD…ATPR), 732-764 (RSVS…RTRS), 829-876 (PSGN…SSRL), and 928-990 (SDEG…GVGA). Composition is skewed to low complexity over residues 591–605 (VSSV…SLPS) and 734–760 (VSNS…SPVT). Positions 710–884 (QLNCVEISAL…RLSIYDNVPG (175 aa)) are focal adhesion-targeting (FAT). A Phosphoserine modification is found at S757. The segment covering 851 to 862 (LRRENSSDSPKE) has biased composition (basic and acidic residues). The segment covering 936–948 (ALDSVSPCPSSPK) has biased composition (polar residues). Positions 950–960 (IHLDVDNDRTT) are enriched in basic and acidic residues. The span at 961–972 (PSDLDSTGNSLN) shows a compositional bias: polar residues. The tract at residues 1051–1073 (KHGFSWAVPKFMKRIKVPDYKDR) is polybasic cluster (PBR). The Rho-GAP domain occupies 1078-1284 (VPLTVNVQRT…HMIAECKKLF (207 aa)). Positions 1314-1521 (GNDDSADYQH…RDSFSNQNTE (208 aa)) constitute an START domain.

In terms of assembly, interacts with EF1A1, facilitates EF1A1 distribution to the membrane periphery and ruffles upon growth factor stimulation and suppresses cell migration. Interacts with tensin TNS1 (via N-terminus); the interaction is decreased by phosphorylation of TNS1. Interacts with TNS3 and PTEN; in resting cells, interacts with TNS3 (via C2 tensin-type domain) but, following growth factor stimulation, TNS3 and PTEN are phosphorylated which leads to weakened interaction with TNS3 and enhanced interaction with PTEN. Interacts (via C-terminus) with tensin TNS4 (via SH2 domain); the interaction is independent of tyrosine phosphorylation of DLC1. In terms of tissue distribution, highest level of expression in the spleen, with rather lower levels in prostate, testis, ovary, small intestine and colon, but none in the thymus.

The protein localises to the cytoplasm. Its subcellular location is the cell junction. It is found in the focal adhesion. The protein resides in the membrane. Its function is as follows. Functions as a GTPase-activating protein for the small GTPases RHOA, RHOB, RHOC and CDC42, terminating their downstream signaling. This induces morphological changes and detachment through cytoskeletal reorganization, playing a critical role in biological processes such as cell migration and proliferation. Also functions in vivo as an activator of the phospholipase PLCD1. Active DLC1 increases cell migration velocity but reduces directionality. Required for growth factor-induced epithelial cell migration; in resting cells, interacts with TNS3 while PTEN interacts with the p85 regulatory subunit of the PI3K kinase complex but growth factor stimulation induces phosphorylation of TNS3 and PTEN, causing them to change their binding preference so that PTEN interacts with DLC1 and TNS3 interacts with p85. The PTEN-DLC1 complex translocates to the posterior of migrating cells to activate RHOA while the TNS3-p85 complex translocates to the leading edge of migrating cells to promote RAC1 activation. The sequence is that of Rho GTPase-activating protein 7 (DLC1) from Homo sapiens (Human).